A 463-amino-acid chain; its full sequence is Argininosuccinate lyase (463 aa).

The protein belongs to the lyase 1 family. Argininosuccinate lyase subfamily.

It is found in the cytoplasm. The catalysed reaction is 2-(N(omega)-L-arginino)succinate = fumarate + L-arginine. It participates in amino-acid biosynthesis; L-arginine biosynthesis; L-arginine from L-ornithine and carbamoyl phosphate: step 3/3. The protein is Argininosuccinate lyase of Chlorobaculum parvum (strain DSM 263 / NCIMB 8327) (Chlorobium vibrioforme subsp. thiosulfatophilum).